Here is a 539-residue protein sequence, read N- to C-terminus: uncharacterized protein (539 aa).

Residues 316–433 (AEHHHQKGKK…ATVERSSPPE (118 aa)) are disordered. Basic residues predominate over residues 318-352 (HHHQKGKKVPATHRRSSTPHARKTAGTRARTRARK). The span at 362–384 (KISKKDSGESKQKDETAGMERVF) shows a compositional bias: basic and acidic residues. Over residues 390–402 (NVRTCSSRASRTG) the composition is skewed to polar residues.

This is an uncharacterized protein from Treponema pallidum (strain Nichols).